The following is a 119-amino-acid chain: Large ribosomal subunit protein bL20 (119 aa).

This sequence belongs to the bacterial ribosomal protein bL20 family.

Functionally, binds directly to 23S ribosomal RNA and is necessary for the in vitro assembly process of the 50S ribosomal subunit. It is not involved in the protein synthesizing functions of that subunit. The sequence is that of Large ribosomal subunit protein bL20 from Streptococcus pyogenes serotype M1.